The chain runs to 269 residues: Putative pyruvate, phosphate dikinase regulatory protein (269 aa).

An ADP-binding site is contributed by G153–T160.

It belongs to the pyruvate, phosphate/water dikinase regulatory protein family. PDRP subfamily.

The enzyme catalyses N(tele)-phospho-L-histidyl/L-threonyl-[pyruvate, phosphate dikinase] + ADP = N(tele)-phospho-L-histidyl/O-phospho-L-threonyl-[pyruvate, phosphate dikinase] + AMP + H(+). The catalysed reaction is N(tele)-phospho-L-histidyl/O-phospho-L-threonyl-[pyruvate, phosphate dikinase] + phosphate + H(+) = N(tele)-phospho-L-histidyl/L-threonyl-[pyruvate, phosphate dikinase] + diphosphate. Functionally, bifunctional serine/threonine kinase and phosphorylase involved in the regulation of the pyruvate, phosphate dikinase (PPDK) by catalyzing its phosphorylation/dephosphorylation. In Pediococcus pentosaceus (strain ATCC 25745 / CCUG 21536 / LMG 10740 / 183-1w), this protein is Putative pyruvate, phosphate dikinase regulatory protein.